The sequence spans 901 residues: Protein translocase subunit SecA (901 aa).

ATP is bound by residues Gln87, 105-109, and Asp512; that span reads GEGKT. Cys885, Cys887, Cys896, and His897 together coordinate Zn(2+).

The protein belongs to the SecA family. Monomer and homodimer. Part of the essential Sec protein translocation apparatus which comprises SecA, SecYEG and auxiliary proteins SecDF-YajC and YidC. It depends on Zn(2+) as a cofactor.

The protein resides in the cell inner membrane. The protein localises to the cytoplasm. The enzyme catalyses ATP + H2O + cellular proteinSide 1 = ADP + phosphate + cellular proteinSide 2.. Its function is as follows. Part of the Sec protein translocase complex. Interacts with the SecYEG preprotein conducting channel. Has a central role in coupling the hydrolysis of ATP to the transfer of proteins into and across the cell membrane, serving both as a receptor for the preprotein-SecB complex and as an ATP-driven molecular motor driving the stepwise translocation of polypeptide chains across the membrane. In Salmonella agona (strain SL483), this protein is Protein translocase subunit SecA.